A 554-amino-acid polypeptide reads, in one-letter code: Dihydroxy-acid dehydratase (554 aa).

D78 contacts Mg(2+). C119 is a binding site for [2Fe-2S] cluster. Positions 120 and 121 each coordinate Mg(2+). An N6-carboxylysine modification is found at K121. A [2Fe-2S] cluster-binding site is contributed by C191. Residue E444 coordinates Mg(2+). S470 acts as the Proton acceptor in catalysis.

The protein belongs to the IlvD/Edd family. As to quaternary structure, homodimer. [2Fe-2S] cluster is required as a cofactor. The cofactor is Mg(2+).

The catalysed reaction is (2R)-2,3-dihydroxy-3-methylbutanoate = 3-methyl-2-oxobutanoate + H2O. The enzyme catalyses (2R,3R)-2,3-dihydroxy-3-methylpentanoate = (S)-3-methyl-2-oxopentanoate + H2O. It functions in the pathway amino-acid biosynthesis; L-isoleucine biosynthesis; L-isoleucine from 2-oxobutanoate: step 3/4. It participates in amino-acid biosynthesis; L-valine biosynthesis; L-valine from pyruvate: step 3/4. Its function is as follows. Functions in the biosynthesis of branched-chain amino acids. Catalyzes the dehydration of (2R,3R)-2,3-dihydroxy-3-methylpentanoate (2,3-dihydroxy-3-methylvalerate) into 2-oxo-3-methylpentanoate (2-oxo-3-methylvalerate) and of (2R)-2,3-dihydroxy-3-methylbutanoate (2,3-dihydroxyisovalerate) into 2-oxo-3-methylbutanoate (2-oxoisovalerate), the penultimate precursor to L-isoleucine and L-valine, respectively. The chain is Dihydroxy-acid dehydratase from Nitratidesulfovibrio vulgaris (strain ATCC 29579 / DSM 644 / CCUG 34227 / NCIMB 8303 / VKM B-1760 / Hildenborough) (Desulfovibrio vulgaris).